A 253-amino-acid polypeptide reads, in one-letter code: Sugar fermentation stimulation protein homolog (253 aa).

This sequence belongs to the SfsA family.

The chain is Sugar fermentation stimulation protein homolog from Prochlorococcus marinus (strain NATL1A).